Reading from the N-terminus, the 190-residue chain is Glutathione peroxidase 2 (190 aa).

U40 is an active-site residue. U40 is a non-standard amino acid (selenocysteine).

The protein belongs to the glutathione peroxidase family. As to quaternary structure, homotetramer.

The protein localises to the cytoplasm. It localises to the cytosol. It catalyses the reaction 2 glutathione + H2O2 = glutathione disulfide + 2 H2O. The enzyme catalyses a hydroperoxy polyunsaturated fatty acid + 2 glutathione = a hydroxy polyunsaturated fatty acid + glutathione disulfide + H2O. It carries out the reaction tert-butyl hydroperoxide + 2 glutathione = tert-butanol + glutathione disulfide + H2O. The catalysed reaction is cumene hydroperoxide + 2 glutathione = 2-phenylpropan-2-ol + glutathione disulfide + H2O. It catalyses the reaction (13S)-hydroperoxy-(9Z,11E)-octadecadienoate + 2 glutathione = (13S)-hydroxy-(9Z,11E)-octadecadienoate + glutathione disulfide + H2O. The enzyme catalyses (5S)-hydroperoxy-(6E,8Z,11Z,14Z)-eicosatetraenoate + 2 glutathione = (5S)-hydroxy-(6E,8Z,11Z,14Z)-eicosatetraenoate + glutathione disulfide + H2O. It carries out the reaction (12R)-hydroperoxy-(5Z,8Z,10E,14Z)-eicosatetraenoate + 2 glutathione = (12R)-hydroxy-(5Z,8Z,10E,14Z)-eicosatetraenoate + glutathione disulfide + H2O. The catalysed reaction is (15S)-hydroperoxy-(5Z,8Z,11Z,13E)-eicosatetraenoate + 2 glutathione = (15S)-hydroxy-(5Z,8Z,11Z,13E)-eicosatetraenoate + glutathione disulfide + H2O. Catalyzes the reduction of hydroperoxides in a glutathione-dependent manner thus regulating cellular redox homeostasis. Can reduce small soluble hydroperoxides such as H2O2, cumene hydroperoxide and tert-butyl hydroperoxide, as well as several fatty acid-derived hydroperoxides. Cannot reduce phosphatidycholine hydroperoxide. This Callithrix jacchus (White-tufted-ear marmoset) protein is Glutathione peroxidase 2 (GPX2).